A 210-amino-acid chain; its full sequence is Synaptosomal-associated protein 23 (210 aa).

Methionine 1 bears the N-acetylmethionine mark. Phosphoserine occurs at positions 5, 20, 23, and 34. The region spanning 14-76 is the t-SNARE coiled-coil homology 1 domain; the sequence is HQVTDESLES…REAEKTLTEL (63 aa). The stretch at 23–76 forms a coiled coil; sequence STRRILGLAIESQDAGIKTITMLDEQGEQLNRIEEGMDQINKDMREAEKTLTEL. S-palmitoyl cysteine attachment occurs at residues cysteine 79, cysteine 80, cysteine 83, cysteine 85, and cysteine 87. Positions 104–136 are disordered; that stretch reads GDGGDSSPSNVVSKQPSRITNGQPQQTTGAASG. The segment covering 109–133 has biased composition (polar residues); the sequence is SSPSNVVSKQPSRITNGQPQQTTGA. Serine 110 and serine 160 each carry phosphoserine. The 63-residue stretch at 145–207 folds into the t-SNARE coiled-coil homology 2 domain; sequence DAREDEMEEN…DIANTRAKKL (63 aa).

Belongs to the SNAP-25 family. In terms of assembly, homotetramer (via coiled-coil domain), also forms heterotetramers with STX4 and VAMP3. Found in a complex with VAMP8 and STX1A. Found in a complex with VAMP8 and STX4 in pancreas. Interacts simultaneously with SNAPIN and SYN4. Interacts with STX1A. Interacts with STX12. Interacts tightly to multiple syntaxins and synaptobrevins/VAMPs. Interacts with ZDHHC13 (via ANK repeats). Interacts with ZDHHC17 (via ANK repeats).

The protein resides in the cell membrane. The protein localises to the synapse. It localises to the synaptosome. Its subcellular location is the cytoplasmic vesicle membrane. In terms of biological role, essential component of the high affinity receptor for the general membrane fusion machinery and an important regulator of transport vesicle docking and fusion. The polypeptide is Synaptosomal-associated protein 23 (Snap23) (Rattus norvegicus (Rat)).